The chain runs to 171 residues: MEIILIKPVRKLGKIGDILKVANGFGRNYLLPQKLAIRATKSNKELIVKQKHEFEAKDKQIRAEVEKINTLIKDQQLVFIRQTSDDCKLFGSVTNKDIADKLSKNISYNISHSNVILDKQIKSTGIYTVEIRLHAELTAIVTVIVARSDSEAQDYLREQKTENSADLAESE.

It belongs to the bacterial ribosomal protein bL9 family.

Binds to the 23S rRNA. The chain is Large ribosomal subunit protein bL9 from Rickettsia typhi (strain ATCC VR-144 / Wilmington).